The chain runs to 560 residues: uncharacterized protein (560 aa).

Residues 1 to 281 (MLWNWVALVG…LGSFFHVAMN (281 aa)) form the ABC transmembrane type-1 domain. 7 helical membrane-spanning segments follow: residues 2-22 (LWNWVALVGGIISAVVFSYIL), 32-52 (LLSAVILGIVLIAALALRAFA), 108-128 (IYFGRYLPQLFYSLLAPLTLF), 138-160 (TAIILLICVPLIPMSIIAVNKIA), 168-188 (WSIYVGLGSSFLDNLQGLITL), 223-243 (VSLMDLLAYGGAAIGILTALL), and 249-269 (QLSVLGVILFILLSSEFFIPL). One can recognise an ABC transporter domain in the interval 314-547 (VEIKDLHFSY…QGAYAEMFQQ (234 aa)). 347–354 (GKSGCGKS) contacts ATP.

This sequence belongs to the ABC transporter superfamily.

Its subcellular location is the cell inner membrane. This is an uncharacterized protein from Haemophilus influenzae (strain ATCC 51907 / DSM 11121 / KW20 / Rd).